Consider the following 655-residue polypeptide: Proprotein convertase subtilisin/kexin type 4 (655 aa).

The first 26 residues, Met1–Ala26, serve as a signal peptide directing secretion. The propeptide occupies Gln27–Arg110. One can recognise a Peptidase S8 domain in the interval Gln123–Val437. Catalysis depends on charge relay system residues Asp155, His196, and Ser370. A P/Homo B domain is found at Thr446–Asp580. A glycan (N-linked (GlcNAc...) asparagine) is linked at Asn472.

It belongs to the peptidase S8 family. Furin subfamily. The proPCSK4 form interacts with HSPA5; the interaction takes place at the endoplasmic reticulum. Post-translationally, N-glycosylated. In terms of processing, synthesized in the endoplasmic reticulum as a zymogen, is matured by autocatalytic cleavage between the prodomain and the catalytic domain. In terms of tissue distribution, expressed abundantly in the testis since postnatal Day 16. In testis, strongly detected in round and elongated spermatids as well as spermatocytes. Also observed in residual bodies engulfed by Sertoli cells at spermatogenic stages VIII and IX. In ovaries, expressed in macrophage-like cells of the ovarian theca, interstitium and corpora lutea.

It is found in the cytoplasmic vesicle. The protein resides in the secretory vesicle. The protein localises to the acrosome membrane. Proprotein convertase involved in the processing of hormone and other protein precursors at sites comprised of pairs of basic amino acid residues. In males, important for ADAM2 processing as well as other acrosomal proteins with roles in fertilization and critical for normal fertilization events such as sperm capacitation, acrosome reaction and binding of sperm to zona pellucida. Also plays a role in female fertility, involved in the regulation of trophoblast migration and placental development, may be through the proteolytical processing and activation of proteins such as IGF2. May also participate in folliculogenesis in the ovaries. This chain is Proprotein convertase subtilisin/kexin type 4 (Pcsk4), found in Mus musculus (Mouse).